The chain runs to 127 residues: Protein ApaG (127 aa).

One can recognise an ApaG domain in the interval 3–127 (DDPRYRVEVE…FVLSVPRTLH (125 aa)).

The sequence is that of Protein ApaG from Xanthomonas axonopodis pv. citri (strain 306).